Reading from the N-terminus, the 60-residue chain is Protein BNLF2a (60 aa).

Residues 14–26 (SSACGLPGSSTET) are compositionally biased toward polar residues. A disordered region spans residues 14–34 (SSACGLPGSSTETRPSHPCPE). A helical transmembrane segment spans residues 41–59 (LRLLLVVLCVLFGLLCLLL).

It belongs to the lymphocryptovirus BNLF2a family. In terms of assembly, interacts with host TAP1 and TAP2.

The protein localises to the host endoplasmic reticulum membrane. Its function is as follows. Participates in viral evasion from HLA class I-restricted T-cell immunity. Associates with host TAP1 and TAP2 and prevents TAP-mediated peptide transport and subsequent loading. The chain is Protein BNLF2a from Homo sapiens (Human).